The following is a 166-amino-acid chain: Endoribonuclease YbeY (166 aa).

The Zn(2+) site is built by His130, His134, and His140.

It belongs to the endoribonuclease YbeY family. The cofactor is Zn(2+).

Its subcellular location is the cytoplasm. In terms of biological role, single strand-specific metallo-endoribonuclease involved in late-stage 70S ribosome quality control and in maturation of the 3' terminus of the 16S rRNA. This is Endoribonuclease YbeY from Streptococcus uberis (strain ATCC BAA-854 / 0140J).